We begin with the raw amino-acid sequence, 70 residues long: Cold shock-like protein CspH (70 aa).

The CSD domain maps to 7–67; the sequence is GIVKTFDRKS…GLRGPTAANV (61 aa).

The protein localises to the cytoplasm. The chain is Cold shock-like protein CspH (cspH) from Escherichia coli O6:H1 (strain CFT073 / ATCC 700928 / UPEC).